The sequence spans 252 residues: 5'-nucleotidase SurE (252 aa).

Residues Asp8, Asp9, Ser39, and Asn95 each contribute to the a divalent metal cation site.

It belongs to the SurE nucleotidase family. A divalent metal cation is required as a cofactor.

Its subcellular location is the cytoplasm. The enzyme catalyses a ribonucleoside 5'-phosphate + H2O = a ribonucleoside + phosphate. Its function is as follows. Nucleotidase that shows phosphatase activity on nucleoside 5'-monophosphates. The chain is 5'-nucleotidase SurE from Clostridium botulinum (strain Kyoto / Type A2).